A 589-amino-acid polypeptide reads, in one-letter code: Proline--tRNA ligase (589 aa).

This sequence belongs to the class-II aminoacyl-tRNA synthetase family. ProS type 1 subfamily. Homodimer.

It is found in the cytoplasm. It catalyses the reaction tRNA(Pro) + L-proline + ATP = L-prolyl-tRNA(Pro) + AMP + diphosphate. Catalyzes the attachment of proline to tRNA(Pro) in a two-step reaction: proline is first activated by ATP to form Pro-AMP and then transferred to the acceptor end of tRNA(Pro). As ProRS can inadvertently accommodate and process non-cognate amino acids such as alanine and cysteine, to avoid such errors it has two additional distinct editing activities against alanine. One activity is designated as 'pretransfer' editing and involves the tRNA(Pro)-independent hydrolysis of activated Ala-AMP. The other activity is designated 'posttransfer' editing and involves deacylation of mischarged Ala-tRNA(Pro). The misacylated Cys-tRNA(Pro) is not edited by ProRS. The sequence is that of Proline--tRNA ligase from Gloeobacter violaceus (strain ATCC 29082 / PCC 7421).